The following is a 183-amino-acid chain: ARS-binding factor 2, mitochondrial (183 aa).

The N-terminal 26 residues, 1 to 26 (MNSYSLLTRSFHESSKPLFNLASTLL), are a transit peptide targeting the mitochondrion. 2 consecutive DNA-binding regions (HMG box) follow at residues 43–111 (PKRP…KEFD) and 116–183 (PKKP…YPLN).

The protein localises to the mitochondrion. It localises to the nucleus. Its function is as follows. Specific binding to the autonomously replicating sequence 1 (ARS1). Interaction with regulatory regions: probably involved in compacting the mitochondrial genome. It might play a positive role in gene expression and replication. In Saccharomyces cerevisiae (strain ATCC 204508 / S288c) (Baker's yeast), this protein is ARS-binding factor 2, mitochondrial (ABF2).